A 283-amino-acid polypeptide reads, in one-letter code: Cytosolic Fe-S cluster assembly factor CFD1 (283 aa).

26-33 (GKGGVGKS) lines the ATP pocket. The [4Fe-4S] cluster site is built by cysteine 202 and cysteine 205.

This sequence belongs to the Mrp/NBP35 ATP-binding proteins family. NUBP2/CFD1 subfamily. Heterotetramer of 2 NBP35 and 2 CFD1 chains. The cofactor is [4Fe-4S] cluster.

It is found in the cytoplasm. In terms of biological role, component of the cytosolic iron-sulfur (Fe/S) protein assembly (CIA) machinery. Required for maturation of extramitochondrial Fe-S proteins. The NBP35-CFD1 heterotetramer forms a Fe-S scaffold complex, mediating the de novo assembly of an Fe-S cluster and its transfer to target apoproteins. Required for biogenesis and export of both ribosomal subunits, which may reflect a role in assembly of the Fe/S clusters in RLI1, a protein which performs rRNA processing and ribosome export. The sequence is that of Cytosolic Fe-S cluster assembly factor CFD1 from Kluyveromyces lactis (strain ATCC 8585 / CBS 2359 / DSM 70799 / NBRC 1267 / NRRL Y-1140 / WM37) (Yeast).